The sequence spans 321 residues: MITRLFENDKQLEGFFSSLDKKKKYLLALSGGSDSLFLMYLLKSRAIFFTAVHVDYGWRETSYQEASDLAALCEQEQIPFILDRPEATDPMDSRDIENAARRYRYELFYRLCKEKCFSGVFLGHHADDQAETILKRVFEGAHLGNLKGMSAQVMYRDVALLRPLLHIPKHKIVEALDSHQVQYVQDITNCNERFLRARMRERLFPYLQDVFGKNIRDPLLSLAGDSAELREYLDQQTAPFLLRVVDNERGKLLPIEQELLKTPFLAKWVCKQFFLNERLVASKSFLQTVYDHLMTGSTARLRLRNRTVLVKARGVIIESIY.

30–35 (SGGSDS) contacts ATP.

The protein belongs to the tRNA(Ile)-lysidine synthase family.

Its subcellular location is the cytoplasm. It catalyses the reaction cytidine(34) in tRNA(Ile2) + L-lysine + ATP = lysidine(34) in tRNA(Ile2) + AMP + diphosphate + H(+). Its function is as follows. Ligates lysine onto the cytidine present at position 34 of the AUA codon-specific tRNA(Ile) that contains the anticodon CAU, in an ATP-dependent manner. Cytidine is converted to lysidine, thus changing the amino acid specificity of the tRNA from methionine to isoleucine. The chain is tRNA(Ile)-lysidine synthase from Chlamydia trachomatis serovar A (strain ATCC VR-571B / DSM 19440 / HAR-13).